The following is a 67-amino-acid chain: ATP synthase F(0) complex subunit 8 (67 aa).

A helical membrane pass occupies residues 8–24 (TWFITIISSMITLFILF). K54 is subject to N6-acetyllysine; alternate. K54 carries the N6-succinyllysine; alternate modification. The residue at position 57 (K57) is an N6-acetyllysine.

This sequence belongs to the ATPase protein 8 family. As to quaternary structure, component of the ATP synthase complex composed at least of ATP5F1A/subunit alpha, ATP5F1B/subunit beta, ATP5MC1/subunit c (homooctomer), MT-ATP6/subunit a, MT-ATP8/subunit 8, ATP5ME/subunit e, ATP5MF/subunit f, ATP5MG/subunit g, ATP5MK/subunit k, ATP5MJ/subunit j, ATP5F1C/subunit gamma, ATP5F1D/subunit delta, ATP5F1E/subunit epsilon, ATP5PF/subunit F6, ATP5PB/subunit b, ATP5PD/subunit d, ATP5PO/subunit OSCP. ATP synthase complex consists of a soluble F(1) head domain (subunits alpha(3) and beta(3)) - the catalytic core - and a membrane F(0) domain - the membrane proton channel (subunits c, a, 8, e, f, g, k and j). These two domains are linked by a central stalk (subunits gamma, delta, and epsilon) rotating inside the F1 region and a stationary peripheral stalk (subunits F6, b, d, and OSCP). Interacts with PRICKLE3.

The protein localises to the mitochondrion membrane. In terms of biological role, subunit 8, of the mitochondrial membrane ATP synthase complex (F(1)F(0) ATP synthase or Complex V) that produces ATP from ADP in the presence of a proton gradient across the membrane which is generated by electron transport complexes of the respiratory chain. ATP synthase complex consist of a soluble F(1) head domain - the catalytic core - and a membrane F(1) domain - the membrane proton channel. These two domains are linked by a central stalk rotating inside the F(1) region and a stationary peripheral stalk. During catalysis, ATP synthesis in the catalytic domain of F(1) is coupled via a rotary mechanism of the central stalk subunits to proton translocation. In vivo, can only synthesize ATP although its ATP hydrolase activity can be activated artificially in vitro. Part of the complex F(0) domain. The sequence is that of ATP synthase F(0) complex subunit 8 from Mus musculus (Mouse).